We begin with the raw amino-acid sequence, 212 residues long: Protein-L-isoaspartate O-methyltransferase (212 aa).

Serine 56 is a catalytic residue.

The protein belongs to the methyltransferase superfamily. L-isoaspartyl/D-aspartyl protein methyltransferase family.

It is found in the cytoplasm. The enzyme catalyses [protein]-L-isoaspartate + S-adenosyl-L-methionine = [protein]-L-isoaspartate alpha-methyl ester + S-adenosyl-L-homocysteine. Functionally, catalyzes the methyl esterification of L-isoaspartyl residues in peptides and proteins that result from spontaneous decomposition of normal L-aspartyl and L-asparaginyl residues. It plays a role in the repair and/or degradation of damaged proteins. The polypeptide is Protein-L-isoaspartate O-methyltransferase (Myxococcus xanthus (strain DK1622)).